Here is a 274-residue protein sequence, read N- to C-terminus: Lectin-like protein (274 aa).

A signal peptide spans 1 to 19 (MKIHKLCFLALLLAHTTSA). The tract at residues 28–268 (TSELVFLGDA…RHDIWSWTFQ (241 aa)) is legume-lectin like. Residues 62-81 (SHGQSLWSTPVPFKPSSNSS) form a disordered region. Asparagine 129 carries an N-linked (GlcNAc...) asparagine glycan. The residue at position 238 (serine 238) is a Phosphoserine.

This sequence belongs to the leguminous lectin family. In terms of tissue distribution, expressed in seedlings and leaves of adult plants.

The protein resides in the secreted. The protein localises to the extracellular space. It localises to the apoplast. Its subcellular location is the cell membrane. Functionally, plays a positive role in the effector-triggered immunity (ETI) response. Involved in salicylic acid (SA)-mediated processes occurring in ETI response, but is not involved in the autophagy process. Promotes systemic rather than local immunity. Essential for systemic acquired resistance (SAR), but not necessary for immune signaling downstream of SA. May act in parallel with SA. This is Lectin-like protein from Arabidopsis thaliana (Mouse-ear cress).